Reading from the N-terminus, the 240-residue chain is Sialidase 85-1.2 (240 aa).

The segment covering 127–142 (DDDDGGDDDDEEDSQE) has biased composition (acidic residues). Disordered regions lie at residues 127–158 (DDDD…GKKP) and 221–240 (HRGG…QRDA). The span at 144 to 155 (SSPKESSPEKIG) shows a compositional bias: basic and acidic residues.

This sequence belongs to the glycosyl hydrolase 33 family.

The enzyme catalyses Hydrolysis of alpha-(2-&gt;3)-, alpha-(2-&gt;6)-, alpha-(2-&gt;8)- glycosidic linkages of terminal sialic acid residues in oligosaccharides, glycoproteins, glycolipids, colominic acid and synthetic substrates.. In terms of biological role, developmentally regulated neuraminidase implicated in parasite invasion of cells. May contribute to the pathology during T.cruzi infection by cleaving sialic acid from cells of the immune system. The sequence is that of Sialidase 85-1.2 (SA85-1.2) from Trypanosoma cruzi.